A 233-amino-acid polypeptide reads, in one-letter code: Pyridoxal phosphate homeostasis protein (233 aa).

K36 is modified (N6-(pyridoxal phosphate)lysine).

Belongs to the pyridoxal phosphate-binding protein YggS/PROSC family.

Functionally, pyridoxal 5'-phosphate (PLP)-binding protein, which is involved in PLP homeostasis. This chain is Pyridoxal phosphate homeostasis protein, found in Vibrio alginolyticus.